Consider the following 1336-residue polypeptide: Vascular endothelial growth factor receptor 1 (1336 aa).

The N-terminal stretch at 1–22 (MVSCWDTAVLPCALLGCLLLTG) is a signal peptide. Topologically, residues 23–758 (YCSGSKLKGP…QGTSDKSNLE (736 aa)) are extracellular. Ig-like C2-type domains follow at residues 32-121 (PELS…KKME), 151-214 (GREL…VNGH), 230-327 (LDVQ…TSVH), 335-421 (SVKH…LTAT), 429-549 (QIYE…RDIR), 556-655 (PNGF…EVLV), and 661-747 (PLLL…AYLT). Cystine bridges form between Cys53–Cys107 and Cys158–Cys207. 4 N-linked (GlcNAc...) asparagine glycosylation sites follow: Asn100, Asn164, Asn196, and Asn251. Cys252 and Cys311 are disulfide-bonded. Residues Asn323, Asn417, Asn474, Asn516, Asn597, Asn625, Asn666, and Asn713 are each glycosylated (N-linked (GlcNAc...) asparagine). Disulfide bonds link Cys454-Cys535 and Cys577-Cys636. Cysteines 682 and 731 form a disulfide. Residues 759-780 (LITLTCTCVAATLFWLLLTLFI) traverse the membrane as a helical segment. The Cytoplasmic portion of the chain corresponds to 781–1336 (RKLKRSSSEV…SVVLYSSPPA (556 aa)). In terms of domain architecture, Protein kinase spans 827–1158 (LKLGKSLGRG…ELVEKLGDLL (332 aa)). ATP contacts are provided by residues 833–841 (LGRGAFGKV) and Lys861. Tyr914 is subject to Phosphotyrosine; by autocatalysis. The segment covering 941 to 957 (KKEKLEPDLEQDQKPRL) has biased composition (basic and acidic residues). The tract at residues 941–982 (KKEKLEPDLEQDQKPRLDSVSSSESFTSSGFQEDKSVSDVEG) is disordered. A compositionally biased stretch (low complexity) spans 959–969 (SVSSSESFTSS). Asp1022 acts as the Proton acceptor in catalysis. Residues Tyr1053, Tyr1169, Tyr1213, Tyr1242, Tyr1325, and Tyr1331 each carry the phosphotyrosine; by autocatalysis modification. The disordered stretch occupies residues 1304-1326 (RQEDEDDPELGKESCCSPPPDYN).

Belongs to the protein kinase superfamily. Tyr protein kinase family. CSF-1/PDGF receptor subfamily. In terms of assembly, interacts with VEGFA, VEGFB and PGF. Monomer in the absence of bound VEGFA, VEGFB or PGF. Homodimer in the presence of bound VEGFA, VEGFB and PGF. Can also form a heterodimer with KDR. Interacts (tyrosine phosphorylated) with CBL, CRK, GRB2, NCK1, PIK3R1, PLCG, PSEN1 and PTPN11. Probably interacts with PTPRB. Interacts with RACK1. Identified in a complex with CBL and CD2AP. N-glycosylated. In terms of processing, ubiquitinated after VEGFA-mediated autophosphorylation, leading to proteolytic degradation. Post-translationally, autophosphorylated on tyrosine residues upon ligand binding. Autophosphorylation occurs in trans, i.e. one subunit of the dimeric receptor phosphorylates tyrosine residues on the other subunit. Phosphorylation at Tyr-1169 is important for interaction with PLCG. Phosphorylation at Tyr-1213 is important for interaction with PIK3R1, PTPN11, GRB2, and PLCG. Phosphorylation at Tyr-1331 is important for endocytosis and for interaction with CBL, NCK1 and CRK. Is probably dephosphorylated by PTPRB.

The protein localises to the cell membrane. The protein resides in the endosome. The catalysed reaction is L-tyrosyl-[protein] + ATP = O-phospho-L-tyrosyl-[protein] + ADP + H(+). Present in an inactive conformation in the absence of bound ligand. Binding of VEGFA, VEGFB or PGF leads to dimerization and activation by autophosphorylation on tyrosine residues. In terms of biological role, tyrosine-protein kinase that acts as a cell-surface receptor for VEGFA, VEGFB and PGF, and plays an essential role in the development of embryonic vasculature, the regulation of angiogenesis, cell survival, cell migration, macrophage function, chemotaxis, and cancer cell invasion. Acts as a positive regulator of postnatal retinal hyaloid vessel regression. May play an essential role as a negative regulator of embryonic angiogenesis by inhibiting excessive proliferation of endothelial cells. Can promote endothelial cell proliferation, survival and angiogenesis in adulthood. Its function in promoting cell proliferation seems to be cell-type specific. Promotes PGF-mediated proliferation of endothelial cells, and proliferation of some types of cancer cells, but does not promote proliferation of normal fibroblasts. Has very high affinity for VEGFA and relatively low protein kinase activity; may function as a negative regulator of VEGFA signaling by limiting the amount of free VEGFA and preventing its binding to KDR. Modulates KDR signaling by forming heterodimers with KDR. Ligand binding leads to the activation of several signaling cascades. Activation of PLCG leads to the production of the cellular signaling molecules diacylglycerol and inositol 1,4,5-trisphosphate and the activation of protein kinase C. Mediates phosphorylation of PIK3R1, the regulatory subunit of phosphatidylinositol 3-kinase, leading to the activation of phosphatidylinositol kinase and the downstream signaling pathway. Mediates activation of MAPK1/ERK2, MAPK3/ERK1 and the MAP kinase signaling pathway, as well as of the AKT1 signaling pathway. Phosphorylates SRC, YES1 and PLCG, and may also phosphorylate CBL. Promotes phosphorylation of AKT1 and PTK2/FAK1. The polypeptide is Vascular endothelial growth factor receptor 1 (Flt1) (Rattus norvegicus (Rat)).